The chain runs to 108 residues: MLAERDTLEKNYCELFEVPVDGRSNDGDAMLLQEALRGKDNEIRMLEERLAVSSKNVERLNDELLGANLEANVLGQKLQDLQQEHDKLLERWMQRVRVEVDKMNAQLE.

A coiled-coil region spans residues 28–94 (DAMLLQEALR…HDKLLERWMQ (67 aa)).

It belongs to the ATG16 family. Homodimer. Part of the ATG5-ATG12/ATG16 complex. Several units of each may be present in this complex.

The protein resides in the preautophagosomal structure membrane. Functionally, stabilizes the ATG5-ATG12 conjugate which is necessary for autophagy. The ATG5-ATG12/ATG16 complex is required for efficient promotion of ATG8-conjugation to phosphatidylethanolamine and ATG8 localization to the pre-autophagosomal structure (PAS). Also recruits ATG3 to the PAS. Involved in endoplasmic reticulum-specific autophagic process and is essential for the survival of cells subjected to severe ER stress. The protein is Autophagy protein 16 (ATG16) of Candida glabrata (strain ATCC 2001 / BCRC 20586 / JCM 3761 / NBRC 0622 / NRRL Y-65 / CBS 138) (Yeast).